Reading from the N-terminus, the 104-residue chain is MGIDPNYRTNRQVVGEHSGHKVYGPVEPPKVLGIHGTIVGVDFDLCIADGSCINACPVNVFQWYDTPGHPASEKKADPVNEQACIFCMACVNVCPVAAIDVKPP.

The tract at residues 2 to 37 (GIDPNYRTNRQVVGEHSGHKVYGPVEPPKVLGIHGT) is N-terminal extension. 2 residues coordinate Zn(2+): histidine 17 and histidine 20. Lysine 30 bears the N6-methyllysine mark. Histidine 35 is a Zn(2+) binding site. 4Fe-4S ferredoxin-type domains are found at residues 38 to 66 (IVGV…WYDT) and 75 to 104 (KADP…VKPP). [3Fe-4S] cluster contacts are provided by cysteine 46 and cysteine 52. Cysteine 56 contributes to the [4Fe-4S] cluster binding site. Zn(2+) is bound at residue aspartate 77. Residues cysteine 84, cysteine 87, and cysteine 90 each coordinate [4Fe-4S] cluster. Cysteine 94 is a [3Fe-4S] cluster binding site.

It depends on [3Fe-4S] cluster as a cofactor. The cofactor is [4Fe-4S] cluster. Zn(2+) is required as a cofactor.

In terms of biological role, ferredoxins are iron-sulfur proteins that transfer electrons in a wide variety of metabolic reactions. This Sulfurisphaera tokodaii (strain DSM 16993 / JCM 10545 / NBRC 100140 / 7) (Sulfolobus tokodaii) protein is Zinc-containing ferredoxin-1 (zfx1).